Here is a 278-residue protein sequence, read N- to C-terminus: Large ribosomal subunit protein uL2 (278 aa).

The tract at residues 201 to 278 (HGNINDGKAG…IMRSRHQRKK (78 aa)) is disordered. The segment covering 210–221 (GRSRWRGKRPHV) has biased composition (basic residues).

This sequence belongs to the universal ribosomal protein uL2 family. Part of the 50S ribosomal subunit. Forms a bridge to the 30S subunit in the 70S ribosome.

Functionally, one of the primary rRNA binding proteins. Required for association of the 30S and 50S subunits to form the 70S ribosome, for tRNA binding and peptide bond formation. It has been suggested to have peptidyltransferase activity; this is somewhat controversial. Makes several contacts with the 16S rRNA in the 70S ribosome. In Rhizobium meliloti (strain 1021) (Ensifer meliloti), this protein is Large ribosomal subunit protein uL2.